A 533-amino-acid chain; its full sequence is Inositol-3-phosphate synthase (533 aa).

The residue at position 48 (Thr48) is a Phosphothreonine. The NAD(+) site is built by Gly74, Gly75, Asn76, Asn77, and Asp148. 2 positions are modified to phosphoserine: Ser177 and Ser184. Ser184, Ile185, Gln195, Asp196, Arg198, Thr244, Ala245, Asn246, Thr247, Gly295, Ser296, Asp320, Leu321, Ser323, Asn354, Asn355, and Asp356 together coordinate NAD(+). At Ser296 the chain carries Phosphoserine. Residue Ser368 is modified to Phosphoserine. Position 369 (Lys369) interacts with NAD(+). The residue at position 374 (Ser374) is a Phosphoserine. NAD(+) contacts are provided by Gly409, Asp410, Asp438, and Ser439.

This sequence belongs to the myo-inositol 1-phosphate synthase family. As to quaternary structure, homotetramer. Requires NAD(+) as cofactor. Phosphorylation at Ser-184 and Ser-374 is associated with a decrease in activity. Increasingly phosphorylated in presence of valproate.

Its subcellular location is the cytoplasm. It catalyses the reaction D-glucose 6-phosphate = 1D-myo-inositol 3-phosphate. The protein operates within polyol metabolism; myo-inositol biosynthesis; myo-inositol from D-glucose 6-phosphate: step 1/2. Competitively inhibited by myo-2-inosose 1-phosphate, which is also an intermediate in the catalytic reaction. Competitively inhibited by 2-deoxy-myo-inositol 1-phosphate (dMIP), 1-deoxy-1-(phosphonomethyl)-myo-2-inosose (DPMI), dihydroxyacetone phosphate (DHAP), 6-deoxy-D-glucose 6-(E)-vinylhomophosphonate, 6-deoxy-D-glucitol 6-(E)-vinylhomophosphonate, 2,6-dideoxy-D-glucose 6-(E)-vinylhomophosphonate and 2,6-dideoxy-D-glucitol 6-(E)-vinylhomophosphonate. Inhibited by 2-deoxyglucitol 6-phosphate (dgtolP). Its function is as follows. Key enzyme in myo-inositol biosynthesis pathway that catalyzes the conversion of glucose 6-phosphate to 1-myo-inositol 1-phosphate in a NAD-dependent manner. Rate-limiting enzyme in the synthesis of all inositol-containing compounds. The protein is Inositol-3-phosphate synthase (INO1) of Saccharomyces cerevisiae (strain ATCC 204508 / S288c) (Baker's yeast).